The following is a 203-amino-acid chain: Proteasome subunit beta 1 (203 aa).

Positions 1–7 (MTEKLKG) are cleaved as a propeptide — removed in mature form; by autocatalysis. Thr-8 functions as the Nucleophile in the catalytic mechanism.

The protein belongs to the peptidase T1B family. The 20S proteasome core is composed of 14 alpha and 14 beta subunits that assemble into four stacked heptameric rings, resulting in a barrel-shaped structure. The two inner rings, each composed of seven catalytic beta subunits, are sandwiched by two outer rings, each composed of seven alpha subunits. The catalytic chamber with the active sites is on the inside of the barrel. Has a gated structure, the ends of the cylinder being occluded by the N-termini of the alpha-subunits. Is capped at one or both ends by the proteasome regulatory ATPase, PAN.

It localises to the cytoplasm. The catalysed reaction is Cleavage of peptide bonds with very broad specificity.. With respect to regulation, the formation of the proteasomal ATPase PAN-20S proteasome complex, via the docking of the C-termini of PAN into the intersubunit pockets in the alpha-rings, triggers opening of the gate for substrate entry. Interconversion between the open-gate and close-gate conformations leads to a dynamic regulation of the 20S proteasome proteolysis activity. In terms of biological role, component of the proteasome core, a large protease complex with broad specificity involved in protein degradation. This Thermococcus kodakarensis (strain ATCC BAA-918 / JCM 12380 / KOD1) (Pyrococcus kodakaraensis (strain KOD1)) protein is Proteasome subunit beta 1.